Here is a 165-residue protein sequence, read N- to C-terminus: 2-C-methyl-D-erythritol 2,4-cyclodiphosphate synthase (165 aa).

D13 and H15 together coordinate a divalent metal cation. 4-CDP-2-C-methyl-D-erythritol 2-phosphate-binding positions include 13 to 15 (DRH) and 39 to 40 (HS). H47 is an a divalent metal cation binding site. 4-CDP-2-C-methyl-D-erythritol 2-phosphate contacts are provided by residues 61 to 63 (DIG) and F141.

This sequence belongs to the IspF family. As to quaternary structure, homotrimer. A divalent metal cation is required as a cofactor.

The catalysed reaction is 4-CDP-2-C-methyl-D-erythritol 2-phosphate = 2-C-methyl-D-erythritol 2,4-cyclic diphosphate + CMP. It participates in isoprenoid biosynthesis; isopentenyl diphosphate biosynthesis via DXP pathway; isopentenyl diphosphate from 1-deoxy-D-xylulose 5-phosphate: step 4/6. Its function is as follows. Involved in the biosynthesis of isopentenyl diphosphate (IPP) and dimethylallyl diphosphate (DMAPP), two major building blocks of isoprenoid compounds. Catalyzes the conversion of 4-diphosphocytidyl-2-C-methyl-D-erythritol 2-phosphate (CDP-ME2P) to 2-C-methyl-D-erythritol 2,4-cyclodiphosphate (ME-CPP) with a corresponding release of cytidine 5-monophosphate (CMP). The polypeptide is 2-C-methyl-D-erythritol 2,4-cyclodiphosphate synthase (Thermotoga maritima (strain ATCC 43589 / DSM 3109 / JCM 10099 / NBRC 100826 / MSB8)).